The primary structure comprises 68 residues: Protein SlyX homolog (68 aa).

Belongs to the SlyX family.

The polypeptide is Protein SlyX homolog (Ectopseudomonas mendocina (strain ymp) (Pseudomonas mendocina)).